A 282-amino-acid polypeptide reads, in one-letter code: Large ribosomal subunit protein uL2c (282 aa).

Residues 230–261 (SAQNAVDHPHGGGEGKAPIGRIPSTPWGKPAL) form a disordered region.

This sequence belongs to the universal ribosomal protein uL2 family. As to quaternary structure, part of the 50S ribosomal subunit.

Its subcellular location is the plastid. The chain is Large ribosomal subunit protein uL2c (rpl2) from Helicosporidium sp. subsp. Simulium jonesii (Green alga).